A 195-amino-acid chain; its full sequence is Recombination protein RecR (195 aa).

A C4-type zinc finger spans residues 56-71 (CRQCHSFSDDDICPIC). One can recognise a Toprim domain in the interval 79–174 (SVLCVVETAA…KVTRIAQGIP (96 aa)).

Belongs to the RecR family.

In terms of biological role, may play a role in DNA repair. It seems to be involved in an RecBC-independent recombinational process of DNA repair. It may act with RecF and RecO. This is Recombination protein RecR from Psychrobacter sp. (strain PRwf-1).